Consider the following 226-residue polypeptide: GTP-binding nuclear protein Ran-3 (226 aa).

The Small GTPase Ran-type domain occupies 14-178 (GYPSFKLILV…LYLARKLTGD (165 aa)). GTP is bound at residue 25 to 32 (DGGTGKTT). The interval 44-52 (KRYEPTIGV) is switch-I. GTP-binding positions include Gly-75, 129 to 132 (NKVD), and 157 to 159 (SAK). The segment at 75-91 (GQEKFGGLRDGYYIHGH) is switch-II.

This sequence belongs to the small GTPase superfamily. Ran family. In terms of assembly, found in a nuclear export complex with RanGTP, exportin and pre-miRNA.

Its subcellular location is the nucleus. In terms of biological role, GTP-binding protein involved in nucleocytoplasmic transport. Required for the import of protein into the nucleus and also for RNA export. Involved in chromatin condensation and control of cell cycle. The polypeptide is GTP-binding nuclear protein Ran-3 (RAN3) (Oryza sativa subsp. indica (Rice)).